Consider the following 208-residue polypeptide: MGSFANGQNGSELGIQTPATGSNAALEPPTTSAAAPRCPRLGMAMVAARAAALVMALLSVSLMVSAKQRGTLAIFGIEIPLYAKWSLSDSLQSLVGISAAAAAYSLAQLLSIAHTALKKAPVVPSRRYAWMLLAGDQVFAYAMLSAGSAAAAVANLNRTGVRHTALPNFCKPLPRFCDLSAASIACAFLGCAFLAASAVIDVIWLSRL.

Polar residues-rich tracts occupy residues 1–11 and 17–33; these read MGSFANGQNGS and TPAT…TTSA. Positions 1-33 are disordered; it reads MGSFANGQNGSELGIQTPATGSNAALEPPTTSA. The Cytoplasmic segment spans residues 1–43; it reads MGSFANGQNGSELGIQTPATGSNAALEPPTTSAAAPRCPRLGM. The helical transmembrane segment at 44–64 threads the bilayer; it reads AMVAARAAALVMALLSVSLMV. The Extracellular segment spans residues 65 to 92; sequence SAKQRGTLAIFGIEIPLYAKWSLSDSLQ. The chain crosses the membrane as a helical span at residues 93–113; the sequence is SLVGISAAAAAYSLAQLLSIA. The Cytoplasmic portion of the chain corresponds to 114–128; that stretch reads HTALKKAPVVPSRRY. A helical transmembrane segment spans residues 129 to 149; sequence AWMLLAGDQVFAYAMLSAGSA. The Extracellular segment spans residues 150-183; that stretch reads AAAVANLNRTGVRHTALPNFCKPLPRFCDLSAAS. Asn-157 carries N-linked (GlcNAc...) asparagine glycosylation. The chain crosses the membrane as a helical span at residues 184–204; it reads IACAFLGCAFLAASAVIDVIW. The Cytoplasmic portion of the chain corresponds to 205 to 208; it reads LSRL.

Belongs to the Casparian strip membrane proteins (CASP) family. As to quaternary structure, homodimer and heterodimers.

The protein resides in the cell membrane. The protein is CASP-like protein 3A1 of Hordeum vulgare subsp. vulgare (Domesticated barley).